The chain runs to 156 residues: Endogenous retrovirus group K member 25 Pro protein (156 aa).

Positions 21-96 (FEGLVDTGAD…IPLNLWGRDL (76 aa)) constitute a Peptidase A2 domain. Asp-26 is a catalytic residue. The region spanning 111-156 (YSPTSQKIMTKMGYIPGKGLGKNEDGIKIPVEAKINQKREGIGYPF) is the G-patch domain.

This sequence belongs to the peptidase A2 family. HERV class-II K(HML-2) subfamily. As to quaternary structure, active as a homodimer. Post-translationally, autoproteolytically processed at the N-terminus. Expected C-terminal autoprocessing not detected. The sequence shown is that of the processed Pro protein.

The enzyme catalyses Processing at the authentic HIV-1 PR recognition site and release of the mature p17 matrix and the p24 capsid protein, as a result of the cleavage of the -SQNY-|-PIVQ- cleavage site.. Functionally, retroviral proteases have roles in processing of the primary translation products and the maturation of the viral particle. Endogenous Pro proteins may have kept, lost or modified their original function during evolution. This endogenous protein has retained most of the characteristics of retroviral proteases. The chain is Endogenous retrovirus group K member 25 Pro protein (ERVK-25) from Homo sapiens (Human).